The chain runs to 357 residues: Homoserine kinase (357 aa).

The protein belongs to the GHMP kinase family. Homoserine kinase subfamily. As to quaternary structure, homodimer.

It carries out the reaction L-homoserine + ATP = O-phospho-L-homoserine + ADP + H(+). The protein operates within amino-acid biosynthesis; L-threonine biosynthesis; L-threonine from L-aspartate: step 4/5. In terms of biological role, commits homoserine to the threonine biosynthesis pathway by catalyzing its O-phosphorylation. This chain is Homoserine kinase (THR1), found in Candida albicans (strain SC5314 / ATCC MYA-2876) (Yeast).